Reading from the N-terminus, the 336-residue chain is N-acetylornithine carbamoyltransferase (336 aa).

Carbamoyl phosphate is bound by residues 49–52, W77, and R112; that span reads SMRT. E144 lines the N(2)-acetyl-L-ornithine pocket. Residue 148-151 participates in carbamoyl phosphate binding; the sequence is HPCQ. N(2)-acetyl-L-ornithine-binding residues include K252 and L295. 294-295 serves as a coordination point for carbamoyl phosphate; the sequence is CL. K302 is subject to N6-carboxylysine. Position 322 (R322) interacts with carbamoyl phosphate.

Belongs to the aspartate/ornithine carbamoyltransferase superfamily. AOTCase family. As to quaternary structure, homotrimer.

The protein localises to the cytoplasm. The enzyme catalyses N(2)-acetyl-L-ornithine + carbamoyl phosphate = N(2)-acetyl-L-citrulline + phosphate + H(+). Its pathway is amino-acid biosynthesis; L-arginine biosynthesis. With respect to regulation, carboxylation at Lys-302 increases the catalytic activity of the enzyme. Catalyzes the transfer of the carbamoyl group from carbamoyl phosphate to the delta-amino group of N(2)-acetyl-L-ornithine to produce N(2)-acetyl-L-citrulline. This is a step in an alternative arginine biosynthesis pathway. The enzyme has no activity with ornithine. This is N-acetylornithine carbamoyltransferase from Xylella fastidiosa (strain 9a5c).